We begin with the raw amino-acid sequence, 276 residues long: MGGQKEMADSVKTKLTGKLKAKKVTAPQAKAFSVHLLTASGSFLAFLSVVAASDGRYTAMWWWLGLALFVDGIDGPIARKLEVKYVLPNWSGELLDSIIDYVTYVLIPAFALYQSGFMGTNLSFISGAIIVVSSAIYYADTGMKTKENFFKGFPVVWNMVVFTLFIVRPGEWVAFGTVVASAILSFLPINFLHPVRVVRLRPLNLTIFLLWCAFGVIALYYMLDAPLWVRIGISVTGLYIYFIGAIMQLFPSLGREAALAKARKLVEKQQKSGEAP.

Topologically, residues 1 to 30 are cytoplasmic; sequence MGGQKEMADSVKTKLTGKLKAKKVTAPQAK. Residues 31-51 traverse the membrane as a helical segment; the sequence is AFSVHLLTASGSFLAFLSVVA. Residues 52–57 are Periplasmic-facing; that stretch reads ASDGRY. Residues 58 to 78 traverse the membrane as a helical segment; the sequence is TAMWWWLGLALFVDGIDGPIA. The Cytoplasmic segment spans residues 79-91; sequence RKLEVKYVLPNWS. Residues 92 to 112 traverse the membrane as a helical segment; the sequence is GELLDSIIDYVTYVLIPAFAL. Residues 113-115 are Periplasmic-facing; it reads YQS. Residues 116–136 traverse the membrane as a helical segment; that stretch reads GFMGTNLSFISGAIIVVSSAI. At 137-146 the chain is on the cytoplasmic side; the sequence is YYADTGMKTK. The chain crosses the membrane as a helical span at residues 147-167; the sequence is ENFFKGFPVVWNMVVFTLFIV. The Periplasmic portion of the chain corresponds to 168–171; sequence RPGE. The chain crosses the membrane as a helical span at residues 172–192; the sequence is WVAFGTVVASAILSFLPINFL. The Cytoplasmic portion of the chain corresponds to 193–202; it reads HPVRVVRLRP. The helical transmembrane segment at 203–223 threads the bilayer; that stretch reads LNLTIFLLWCAFGVIALYYML. Residues 224-230 are Periplasmic-facing; it reads DAPLWVR. A helical transmembrane segment spans residues 231–251; sequence IGISVTGLYIYFIGAIMQLFP. Residues 252-276 lie on the Cytoplasmic side of the membrane; the sequence is SLGREAALAKARKLVEKQQKSGEAP.

Belongs to the CDP-alcohol phosphatidyltransferase class-I family. The cofactor is Mn(2+).

The protein resides in the cell inner membrane. The enzyme catalyses a CDP-1,2-diacyl-sn-glycerol + choline = a 1,2-diacyl-sn-glycero-3-phosphocholine + CMP + H(+). Its function is as follows. Condenses choline with CDP-diglyceride to produce phosphatidylcholine and CMP. The chain is Phosphatidylcholine synthase from Brucella melitensis biotype 1 (strain ATCC 23456 / CCUG 17765 / NCTC 10094 / 16M).